We begin with the raw amino-acid sequence, 182 residues long: Thioredoxin F-type, chloroplastic (182 aa).

Residues 1–22 form a disordered region; the sequence is MPLSLRLAPSPTALSPTTGGFS. The Thioredoxin domain occupies 52 to 177; sequence KRGDSSVVRC…LVAAIETARS (126 aa). Catalysis depends on nucleophile residues Cys-102 and Cys-105. Cysteines 102 and 105 form a disulfide.

This sequence belongs to the thioredoxin family. Plant F-type subfamily. In terms of assembly, forms a complex with heterodimeric ferredoxin-thioredoxin reductase (FTR) and ferredoxin.

The protein localises to the plastid. It localises to the chloroplast. Functionally, participates in various redox reactions through the reversible oxidation of the active center dithiol to a disulfide. The F form is known to activate a number of enzymes of the photosynthetic carbon cycle. This Brassica napus (Rape) protein is Thioredoxin F-type, chloroplastic (TRXF).